Here is an 864-residue protein sequence, read N- to C-terminus: Ribosome biogenesis protein ERB1 (864 aa).

Basic and acidic residues predominate over residues methionine 1–isoleucine 52. Disordered stretches follow at residues methionine 1 to glycine 153 and glutamate 191 to aspartate 231. Residues leucine 53 to aspartate 71 show a composition bias toward acidic residues. Basic and acidic residues predominate over residues lysine 72–glutamate 83. Positions aspartate 100–alanine 135 are enriched in acidic residues. WD repeat units follow at residues alanine 509 to threonine 549, alanine 559 to tyrosine 599, asparagine 694 to threonine 732, proline 735 to lysine 774, tyrosine 778 to glutamine 817, and glutamine 833 to proline 864.

The protein belongs to the WD repeat BOP1/ERB1 family. As to quaternary structure, component of the NOP7 complex, composed of ERB1, NOP7 and YTM1. The complex is held together by ERB1, which interacts with NOP7 via its N-terminal domain and with YTM1 via a high-affinity interaction between the seven-bladed beta-propeller domains of the 2 proteins. The NOP7 complex associates with the 66S pre-ribosome.

The protein resides in the nucleus. It localises to the nucleolus. Its subcellular location is the nucleoplasm. Component of the NOP7 complex, which is required for maturation of the 25S and 5.8S ribosomal RNAs and formation of the 60S ribosome. The chain is Ribosome biogenesis protein ERB1 from Malassezia globosa (strain ATCC MYA-4612 / CBS 7966) (Dandruff-associated fungus).